A 581-amino-acid chain; its full sequence is Prolactin receptor (581 aa).

The first 24 residues, 1–24 (MKENAASRVLFILLLFLFASLLNG), serve as a signal peptide directing secretion. Residues 25-237 (QSPPEKPKLI…NDFPVKDTSM (213 aa)) are Extracellular-facing. 2 consecutive Fibronectin type-III domains span residues 27 to 127 (PPEK…IVEP) and 129 to 229 (PPVN…IPND). The cysteines at positions 36 and 46 are disulfide-linked. N-linked (GlcNAc...) asparagine glycosylation occurs at Asn-59. Cys-75 and Cys-86 are disulfide-bonded. N-linked (GlcNAc...) asparagine glycosylation occurs at Asn-132. Residues Asp-211 and His-212 each coordinate Zn(2+). Positions 215–219 (WSEWS) match the WSXWS motif motif. A helical transmembrane segment spans residues 238–258 (WIFVGVLSAVICLIMVWAVAL). The Cytoplasmic portion of the chain corresponds to 259 to 581 (KGYSMVTCIL…SAKKAPPALP (323 aa)). A Box 1 motif motif is present at residues 267–275 (ILPPVPGPK). 2 stretches are compositionally biased toward basic and acidic residues: residues 323 to 349 (QHLM…DTDS) and 375 to 388 (HIPE…DPET). 2 disordered regions span residues 323-388 (QHLM…DPET) and 462-492 (FKPS…PDQD).

This sequence belongs to the type I cytokine receptor family. Type 1 subfamily. Interacts with SMARCA1. Interacts with NEK3 and VAV2 and this interaction is prolactin-dependent. Expressed in all tissues examined; liver, pituitary, adrenal gland, ovary and fetal liver.

The protein resides in the membrane. In terms of biological role, this is a receptor for the anterior pituitary hormone prolactin. The protein is Prolactin receptor (PRLR) of Ovis aries (Sheep).